Reading from the N-terminus, the 462-residue chain is Amino-acid permease AapA (462 aa).

12 helical membrane-spanning segments follow: residues 27–47 (LMAI…KSIH), 48–68 (FAGP…FFIM), 96–116 (AAFI…MADL), 134–154 (LPGL…VKLF), 160–180 (WFAL…ILLI), 209–229 (GFIL…LVGL), 252–272 (ILLF…WNVL), 279–299 (FVQV…NFVV), 343–363 (ALFF…LMPE), 366–386 (FTLI…ITVI), 410–430 (PLSN…LALA), and 435–455 (IALF…KVQT).

It belongs to the amino acid-polyamine-organocation (APC) superfamily.

It is found in the cell membrane. Its function is as follows. Probable amino-acid or metabolite transport protein. The protein is Amino-acid permease AapA (aapA) of Bacillus subtilis (strain 168).